A 123-amino-acid polypeptide reads, in one-letter code: MIQEQTMLTVADNSGARRVMCIKVLGGSHRRYAGVGDIIKITIKEAIPRGKVKKGDVLKAVVVRTRKGVRRPDGSVIRFDGNACVILNNNSEQPIGTRIFGPVTRELRTEKFMKIISLAPEVL.

Belongs to the universal ribosomal protein uL14 family. Part of the 50S ribosomal subunit. Forms a cluster with proteins L3 and L19. In the 70S ribosome, L14 and L19 interact and together make contacts with the 16S rRNA in bridges B5 and B8.

Functionally, binds to 23S rRNA. Forms part of two intersubunit bridges in the 70S ribosome. This is Large ribosomal subunit protein uL14 from Enterobacter sp. (strain 638).